Consider the following 358-residue polypeptide: Cyclin-dependent kinase 10 (358 aa).

The Protein kinase domain occupies 37–321; sequence FEKLNRIGEG…AGDCLESSYF (285 aa). ATP contacts are provided by residues 43-51 and K66; that span reads IGEGTYGIV. The active-site Proton acceptor is D161. At T194 the chain carries Phosphothreonine. A disordered region spans residues 332 to 358; that stretch reads LMPTFPHHRNKRAAPAATEGQSKRCRP.

Belongs to the protein kinase superfamily. CMGC Ser/Thr protein kinase family. CDC2/CDKX subfamily. As to quaternary structure, heterodimer with CCNQ, the interaction is required for kinase activity. Interacts with ETS2. Interacts with PRK2.

The protein resides in the cytoplasm. It localises to the cytoskeleton. Its subcellular location is the cilium basal body. It carries out the reaction L-seryl-[protein] + ATP = O-phospho-L-seryl-[protein] + ADP + H(+). The catalysed reaction is L-threonyl-[protein] + ATP = O-phospho-L-threonyl-[protein] + ADP + H(+). Functionally, cyclin-dependent kinase that phosphorylates the transcription factor ETS2 (in vitro) and positively controls its proteasomal degradation (in cells). Involved in the regulation of actin cytoskeleton organization through the phosphorylation of actin dynamics regulators such as PKN2. Is a negative regulator of ciliogenesis through phosphorylation of PKN2 and promotion of RhoA signaling. In Rattus norvegicus (Rat), this protein is Cyclin-dependent kinase 10 (Cdk10).